The chain runs to 166 residues: Regulatory protein RecX (166 aa).

Belongs to the RecX family.

It is found in the cytoplasm. In terms of biological role, modulates RecA activity. The polypeptide is Regulatory protein RecX (Salmonella newport (strain SL254)).